Consider the following 413-residue polypeptide: GDP-mannose-dependent alpha-mannosyltransferase (413 aa).

Belongs to the glycosyltransferase group 1 family.

The protein operates within phospholipid metabolism; phosphatidylinositol metabolism. Functionally, catalyzes the addition of a mannose residue from GDP-D-mannose to GlcAGroAc2 to generate 1,2-di-O-C16/C18:1-(alpha-D-mannopyranosyl)-(1-4)-(alpha-D-glucopyranosyluronic acid)-(1-3)-glycerol(ManGlcAGroAc2). The chain is GDP-mannose-dependent alpha-mannosyltransferase (mgtA) from Corynebacterium glutamicum (strain ATCC 13032 / DSM 20300 / JCM 1318 / BCRC 11384 / CCUG 27702 / LMG 3730 / NBRC 12168 / NCIMB 10025 / NRRL B-2784 / 534).